Reading from the N-terminus, the 745-residue chain is ATP-dependent zinc metalloprotease FtsH (745 aa).

Topologically, residues 1–11 (MNNRRNGLFRN) are cytoplasmic. A helical transmembrane segment spans residues 12–32 (SLFYILMFLSLMGIIYFFFGG). Over 33-131 (NSGSQTQNIR…VTAKAEESSG (99 aa)) the chain is Extracellular. Residues 132-152 (IWVTLLMYIAPVILMLFLFYM) traverse the membrane as a helical segment. Topologically, residues 153-745 (MMGQAGQGGG…SSQDDTNSQA (593 aa)) are cytoplasmic. 227–234 (GPPGTGKT) contacts ATP. Zn(2+) is bound at residue histidine 449. Residue glutamate 450 is part of the active site. Zn(2+) is bound by residues histidine 453 and aspartate 525. Basic and acidic residues predominate over residues 630–673 (MPEKDSNEFPSEKAATFEESKRELERREAEKHAQNQSADDKQAD). The tract at residues 630–745 (MPEKDSNEFP…SSQDDTNSQA (116 aa)) is disordered. Residues 690 to 704 (SESDASSEVSADSSV) are compositionally biased toward low complexity. Over residues 705 to 745 (NSTANSATESATDSDVATSATGLPNAESATPSSQDDTNSQA) the composition is skewed to polar residues.

It in the central section; belongs to the AAA ATPase family. The protein in the C-terminal section; belongs to the peptidase M41 family. In terms of assembly, homohexamer. Zn(2+) serves as cofactor.

It is found in the cell membrane. In terms of biological role, acts as a processive, ATP-dependent zinc metallopeptidase for both cytoplasmic and membrane proteins. Plays a role in the quality control of integral membrane proteins. The polypeptide is ATP-dependent zinc metalloprotease FtsH (Lactiplantibacillus plantarum (strain ATCC BAA-793 / NCIMB 8826 / WCFS1) (Lactobacillus plantarum)).